The following is a 124-amino-acid chain: Fluoride-specific ion channel FluC (124 aa).

4 helical membrane passes run Ile4–Gly24, Ala32–Met52, Gly68–Phe88, and Leu101–Ala121. Gly75 and Thr78 together coordinate Na(+).

This sequence belongs to the fluoride channel Fluc/FEX (TC 1.A.43) family.

It is found in the cell inner membrane. The catalysed reaction is fluoride(in) = fluoride(out). With respect to regulation, na(+) is not transported, but it plays an essential structural role and its presence is essential for fluoride channel function. In terms of biological role, fluoride-specific ion channel. Important for reducing fluoride concentration in the cell, thus reducing its toxicity. The polypeptide is Fluoride-specific ion channel FluC (Geobacter sulfurreducens (strain ATCC 51573 / DSM 12127 / PCA)).